The sequence spans 489 residues: Betaine aldehyde dehydrogenase (489 aa).

Positions 26 and 93 each coordinate K(+). Position 150-152 (150-152 (GAW)) interacts with NAD(+). The Charge relay system role is filled by lysine 162. Residue 176 to 179 (KPSE) coordinates NAD(+). K(+) is bound at residue valine 180. Residue 229–232 (GVET) participates in NAD(+) binding. Position 245 (leucine 245) interacts with K(+). Glutamate 251 acts as the Proton acceptor in catalysis. Residues glycine 253, cysteine 285, and glutamate 386 each contribute to the NAD(+) site. Cysteine 285 (nucleophile) is an active-site residue. Cysteine 285 carries the cysteine sulfenic acid (-SOH) modification. The K(+) site is built by lysine 456 and glycine 459. Glutamate 463 acts as the Charge relay system in catalysis.

This sequence belongs to the aldehyde dehydrogenase family. Dimer of dimers. The cofactor is K(+).

The catalysed reaction is betaine aldehyde + NAD(+) + H2O = glycine betaine + NADH + 2 H(+). The protein operates within amine and polyamine biosynthesis; betaine biosynthesis via choline pathway; betaine from betaine aldehyde: step 1/1. In terms of biological role, involved in the biosynthesis of the osmoprotectant glycine betaine. Catalyzes the irreversible oxidation of betaine aldehyde to the corresponding acid. The protein is Betaine aldehyde dehydrogenase of Burkholderia ambifaria (strain MC40-6).